A 216-amino-acid chain; its full sequence is ATP-dependent Clp protease proteolytic subunit (216 aa).

Ser-120 acts as the Nucleophile in catalysis. His-145 is an active-site residue.

The protein belongs to the peptidase S14 family. In terms of assembly, fourteen ClpP subunits assemble into 2 heptameric rings which stack back to back to give a disk-like structure with a central cavity, resembling the structure of eukaryotic proteasomes.

It is found in the cytoplasm. It carries out the reaction Hydrolysis of proteins to small peptides in the presence of ATP and magnesium. alpha-casein is the usual test substrate. In the absence of ATP, only oligopeptides shorter than five residues are hydrolyzed (such as succinyl-Leu-Tyr-|-NHMec, and Leu-Tyr-Leu-|-Tyr-Trp, in which cleavage of the -Tyr-|-Leu- and -Tyr-|-Trp bonds also occurs).. Functionally, cleaves peptides in various proteins in a process that requires ATP hydrolysis. Has a chymotrypsin-like activity. Plays a major role in the degradation of misfolded proteins. The sequence is that of ATP-dependent Clp protease proteolytic subunit from Cupriavidus necator (strain ATCC 17699 / DSM 428 / KCTC 22496 / NCIMB 10442 / H16 / Stanier 337) (Ralstonia eutropha).